Consider the following 59-residue polypeptide: UPF0391 membrane protein lpp2589 (59 aa).

2 consecutive transmembrane segments (helical) span residues 5-25 and 30-50; these read ALIFFIIAIIAAAFGFGGIAV and IAKILFFLFLVMFVIFLIMGL.

This sequence belongs to the UPF0391 family.

The protein localises to the cell membrane. The protein is UPF0391 membrane protein lpp2589 of Legionella pneumophila (strain Paris).